Here is a 78-residue protein sequence, read N- to C-terminus: Broad mercury transporter MerE (78 aa).

The next 2 helical transmembrane spans lie at 19-39 (LWGA…AAVL) and 47-67 (FLGE…VLAV).

The protein resides in the cell inner membrane. In terms of biological role, broad mercury transporter that mediates the transport of both CH(3)Hg(I) and Hg(II) across the membrane. The chain is Broad mercury transporter MerE from Shigella flexneri.